Consider the following 339-residue polypeptide: D-glycero-alpha-D-manno-heptose 7-phosphate kinase (339 aa).

17-20 lines the substrate pocket; sequence GGTD. ATP contacts are provided by residues Ser57 and 110–116; that span reads GSGLGGS. Mg(2+) contacts are provided by Ser116 and Glu148. The active-site Proton acceptor is Asp160.

Belongs to the GHMP kinase family.

It catalyses the reaction D-glycero-alpha-D-manno-heptose 7-phosphate + ATP = D-glycero-alpha-D-manno-heptose 1,7-bisphosphate + ADP + H(+). It participates in nucleotide-sugar biosynthesis; GDP-D-glycero-alpha-D-manno-heptose biosynthesis; GDP-D-glycero-alpha-D-manno-heptose from D-glycero-alpha-D-manno-heptose 7-phosphate: step 1/3. Its pathway is capsule biogenesis; capsule polysaccharide biosynthesis. Functionally, catalyzes the phosphorylation of D-glycero-alpha-D-manno-heptose 7-phosphate at the C-1 position to form D-glycero-alpha-D-manno-heptose 1,7-bisphosphate. In Campylobacter jejuni subsp. jejuni serotype O:2 (strain ATCC 700819 / NCTC 11168), this protein is D-glycero-alpha-D-manno-heptose 7-phosphate kinase.